The sequence spans 254 residues: Gamma-glutamyl-gamma-aminobutyrate hydrolase (254 aa).

One can recognise a Glutamine amidotransferase type-1 domain in the interval 16-250 (RNRLKGHATQ…ITACQHHIAE (235 aa)). Catalysis depends on cysteine 114, which acts as the Nucleophile. Active-site residues include histidine 222 and glutamate 224.

It belongs to the peptidase C26 family.

It catalyses the reaction 4-(gamma-L-glutamylamino)butanoate + H2O = 4-aminobutanoate + L-glutamate. Its pathway is amine and polyamine degradation; putrescine degradation; 4-aminobutanoate from putrescine: step 4/4. Involved in the breakdown of putrescine via hydrolysis of the gamma-glutamyl linkage of gamma-glutamyl-gamma-aminobutyrate. This Escherichia coli O157:H7 protein is Gamma-glutamyl-gamma-aminobutyrate hydrolase (puuD).